A 370-amino-acid polypeptide reads, in one-letter code: MDSPRQIVNFGPGPAKLPHSVLLEIQKELLDYKGLGISVLEMSHRSSDFAKIVNNTENLVRELLAVPDNYKVIFLQGGGCGQFSAVPLNLIGLKPGRCADYVVTGAWSAKAAEEAKKFGTVNIVHPKLGSYTKIPDPSTWNLNPDASYVYYCANETVHGVEFDFVPDVKGAILVCDMSSNFLSRPVDVSKFGVIFAGAQKNVGAAGVTVVIVRDDLLGFALRECPSVLEYKVQATSSSLYNTPPCFSIYVMGLVLEWIKNNGGAAAMKKLSTIKSQMIYEIIDNSQGFYVCPVEPRNRSMMNIPFRIGNAKGDEALEKRFLDKALELHMISLKGHRSVGGVRVSLYNAVTIEDVQKLASFMKNFLEMHQL.

Residue methionine 1 is modified to N-acetylmethionine. O-phospho-L-serine-binding residues include histidine 44 and arginine 45. Lysine 51 carries the post-translational modification N6-acetyllysine. Pyridoxal 5'-phosphate contacts are provided by glycine 79, cysteine 80, and tryptophan 107. Residue lysine 127 is modified to N6-acetyllysine. Residues threonine 156, aspartate 176, and glutamine 199 each contribute to the pyridoxal 5'-phosphate site. Lysine 200 is modified (N6-(pyridoxal phosphate)lysine). Asparagine 241 and threonine 242 together coordinate pyridoxal 5'-phosphate. Residues lysine 269, lysine 318, and lysine 323 each carry the N6-acetyllysine modification. Serine 331 bears the Phosphoserine mark. Lysine 333 is subject to N6-acetyllysine. 3 residues coordinate O-phospho-L-serine: histidine 335, arginine 336, and arginine 342.

This sequence belongs to the class-V pyridoxal-phosphate-dependent aminotransferase family. SerC subfamily. As to quaternary structure, homodimer. Pyridoxal 5'-phosphate serves as cofactor.

The enzyme catalyses O-phospho-L-serine + 2-oxoglutarate = 3-phosphooxypyruvate + L-glutamate. It functions in the pathway amino-acid biosynthesis; L-serine biosynthesis; L-serine from 3-phospho-D-glycerate: step 2/3. Its function is as follows. Involved in L-serine biosynthesis via the phosphorylated pathway, a three-step pathway converting the glycolytic intermediate 3-phospho-D-glycerate into L-serine. Catalyzes the second step, that is the pyridoxal 5'-phosphate-dependent transamination of 3-phosphohydroxypyruvate and L-glutamate to O-phosphoserine (OPS) and alpha-ketoglutarate. In Oryctolagus cuniculus (Rabbit), this protein is Phosphoserine aminotransferase (PSAT1).